Reading from the N-terminus, the 482-residue chain is Putative L-cysteine desulfhydrase 1 (482 aa).

Positions 1-10 (MASIPPDDDA) are enriched in acidic residues. The tract at residues 1–45 (MASIPPDDDAAAAAAAGAAENGYGNGKGNGNGPAPRPPPAKRPRS) is disordered. Over residues 11 to 22 (AAAAAAGAAENG) the composition is skewed to low complexity. Lys-276 is modified (N6-(pyridoxal phosphate)lysine).

Belongs to the class-V pyridoxal-phosphate-dependent aminotransferase family. Pyridoxal 5'-phosphate is required as a cofactor.

The catalysed reaction is L-cysteine + H2O = hydrogen sulfide + pyruvate + NH4(+) + H(+). In terms of biological role, catalyzes the production of hydrogen sulfide (H2S) from cysteine. The chain is Putative L-cysteine desulfhydrase 1 from Oryza sativa subsp. japonica (Rice).